The following is a 350-amino-acid chain: S-adenosylmethionine:tRNA ribosyltransferase-isomerase (350 aa).

Belongs to the QueA family. As to quaternary structure, monomer.

It localises to the cytoplasm. It carries out the reaction 7-aminomethyl-7-carbaguanosine(34) in tRNA + S-adenosyl-L-methionine = epoxyqueuosine(34) in tRNA + adenine + L-methionine + 2 H(+). It functions in the pathway tRNA modification; tRNA-queuosine biosynthesis. Its function is as follows. Transfers and isomerizes the ribose moiety from AdoMet to the 7-aminomethyl group of 7-deazaguanine (preQ1-tRNA) to give epoxyqueuosine (oQ-tRNA). This is S-adenosylmethionine:tRNA ribosyltransferase-isomerase from Bacillus cereus (strain ZK / E33L).